Consider the following 233-residue polypeptide: Orotidine 5'-phosphate decarboxylase (233 aa).

Residues Asp11, Lys33, 60 to 69 (DLKFHDIPNT), Thr120, Arg181, Gln190, Gly210, and Arg211 each bind substrate. Residue Lys62 is the Proton donor of the active site.

This sequence belongs to the OMP decarboxylase family. Type 1 subfamily. As to quaternary structure, homodimer.

The catalysed reaction is orotidine 5'-phosphate + H(+) = UMP + CO2. Its pathway is pyrimidine metabolism; UMP biosynthesis via de novo pathway; UMP from orotate: step 2/2. Its function is as follows. Catalyzes the decarboxylation of orotidine 5'-monophosphate (OMP) to uridine 5'-monophosphate (UMP). The polypeptide is Orotidine 5'-phosphate decarboxylase (Vibrio parahaemolyticus serotype O3:K6 (strain RIMD 2210633)).